The sequence spans 2194 residues: Genome polyprotein (2194 aa).

The interval 1 to 20 is disordered; it reads MGAQVSRQQTGTHENANVAT. Gly2 carries N-myristoyl glycine; by host lipidation. Topologically, residues 2 to 1509 are cytoplasmic; the sequence is GAQVSRQQTG…HISRAFIALQ (1508 aa). Residues 558–574 are amphipathic alpha-helix; it reads LPEQAATTQIGEIVKTV. Catalysis depends on for protease 2A activity residues His885 and Asp903. Residues Cys920 and Cys922 each contribute to the Zn(2+) site. Residue Cys974 is the For protease 2A activity of the active site. Positions 980 and 982 each coordinate Zn(2+). Residues 1114–1186 are membrane-binding; that stretch reads SDSWLKKFTE…EHSCPNSEXQ (73 aa). Residues 1114–1252 form an oligomerization region; the sequence is SDSWLKKFTE…SPGTGKSVAS (139 aa). The RNA-binding stretch occupies residues 1135 to 1139; that stretch reads AQKID. In terms of domain architecture, SF3 helicase spans 1218–1374; sequence ERKINNYIQF…ESYKDGVRLD (157 aa). Position 1242–1249 (1242–1249) interacts with ATP; that stretch reads GSPGTGKS. Zn(2+)-binding residues include Cys1382, Cys1395, and Cys1400. Residues 1382–1400 form a C4-type; degenerate zinc finger; the sequence is CNPEKCRPTNYKKCCPLIC. The tract at residues 1427-1434 is RNA-binding; that stretch reads EYRIRNST. Residues 1438-1443 form an oligomerization region; sequence LEALFQ. An intramembrane segment occupies 1510-1525; sequence AITTFVSIAGVVYVIY. Topologically, residues 1526-2194 are cytoplasmic; that stretch reads KLFAGIQGPY…SLRRKWLDSF (669 aa). Tyr1535 carries the O-(5'-phospho-RNA)-tyrosine modification. Residues 1555–1733 form the Peptidase C3 domain; it reads GPSLDFAQAI…FAAMLLQNYF (179 aa). Active-site for protease 3C activity residues include His1594, Glu1625, and Cys1701. The RdRp catalytic domain maps to 1960–2075; sequence GKIFAFDYTG…SYPHEIDPGL (116 aa). Residues Asp1966 and Asp2061 each contribute to the Mg(2+) site.

This sequence belongs to the picornaviruses polyprotein family. Interacts with capsid protein VP1 and capsid protein VP3 to form heterotrimeric protomers. As to quaternary structure, interacts with capsid protein VP0, and capsid protein VP3 to form heterotrimeric protomers. Five protomers subsequently associate to form pentamers which serve as building blocks for the capsid. Interacts with capsid protein VP2, capsid protein VP3 and capsid protein VP4 following cleavage of capsid protein VP0. In terms of assembly, interacts with capsid protein VP1 and capsid protein VP3 in the mature capsid. Interacts with capsid protein VP0 and capsid protein VP1 to form heterotrimeric protomers. Five protomers subsequently associate to form pentamers which serve as building blocks for the capsid. Interacts with capsid protein VP4 in the mature capsid. Interacts with protein 2C; this interaction may be important for virion morphogenesis. As to quaternary structure, interacts with capsid protein VP1 and capsid protein VP3. In terms of assembly, homodimer. Homohexamer; forms a hexameric ring structure with 6-fold symmetry characteristic of AAA+ ATPases. Interacts (via N-terminus) with host RTN3 (via reticulon domain); this interaction is important for viral replication. Interacts with capsid protein VP3; this interaction may be important for virion morphogenesis. As to quaternary structure, interacts with protein 3CD. In terms of assembly, homodimer. Interacts with host GBF1. Interacts (via GOLD domain) with host ACBD3 (via GOLD domain); this interaction allows the formation of a viral protein 3A/ACBD3 heterotetramer with a 2:2 stoichiometry, which will stimulate the recruitment of host PI4KB in order to synthesize PI4P at the viral RNA replication sites. Interacts with RNA-directed RNA polymerase. As to quaternary structure, interacts with protein 3AB and with RNA-directed RNA polymerase. In terms of assembly, interacts with Viral protein genome-linked and with protein 3CD. Mg(2+) serves as cofactor. Post-translationally, specific enzymatic cleavages in vivo by the viral proteases yield processing intermediates and the mature proteins. In terms of processing, myristoylation is required for the formation of pentamers during virus assembly. Further assembly of 12 pentamers and a molecule of genomic RNA generates the provirion. During virion maturation, immature virions are rendered infectious following cleavage of VP0 into VP4 and VP2. This maturation seems to be an autocatalytic event triggered by the presence of RNA in the capsid and it is followed by a conformational change infectious virion. Post-translationally, myristoylation is required during RNA encapsidation and formation of the mature virus particle. In terms of processing, VPg is uridylylated by the polymerase into VPg-pUpU. This acts as a nucleotide-peptide primer for the genomic RNA replication.

The protein resides in the virion. Its subcellular location is the host cytoplasm. The protein localises to the host cytoplasmic vesicle membrane. It is found in the host nucleus. It catalyses the reaction a ribonucleoside 5'-triphosphate + H2O = a ribonucleoside 5'-diphosphate + phosphate + H(+). The enzyme catalyses Selective cleavage of Tyr-|-Gly bond in the picornavirus polyprotein.. The catalysed reaction is RNA(n) + a ribonucleoside 5'-triphosphate = RNA(n+1) + diphosphate. It carries out the reaction Selective cleavage of Gln-|-Gly bond in the poliovirus polyprotein. In other picornavirus reactions Glu may be substituted for Gln, and Ser or Thr for Gly.. With respect to regulation, replication or transcription is subject to high level of random mutations by the nucleotide analog ribavirin. Its function is as follows. Forms an icosahedral capsid of pseudo T=3 symmetry with capsid proteins VP2 and VP3. The capsid is 300 Angstroms in diameter, composed of 60 copies of each capsid protein and enclosing the viral positive strand RNA genome. Capsid protein VP1 mainly forms the vertices of the capsid. Capsid protein VP1 interacts with host cell receptor to provide virion attachment to target host cells. This attachment induces virion internalization. Tyrosine kinases are probably involved in the entry process. After binding to its receptor, the capsid undergoes conformational changes. Capsid protein VP1 N-terminus (that contains an amphipathic alpha-helix) and capsid protein VP4 are externalized. Together, they shape a pore in the host membrane through which viral genome is translocated to host cell cytoplasm. In terms of biological role, forms an icosahedral capsid of pseudo T=3 symmetry with capsid proteins VP2 and VP3. The capsid is 300 Angstroms in diameter, composed of 60 copies of each capsid protein and enclosing the viral positive strand RNA genome. Lies on the inner surface of the capsid shell. After binding to the host receptor, the capsid undergoes conformational changes. Capsid protein VP4 is released, Capsid protein VP1 N-terminus is externalized, and together, they shape a pore in the host membrane through which the viral genome is translocated into the host cell cytoplasm. Functionally, component of immature procapsids, which is cleaved into capsid proteins VP4 and VP2 after maturation. Allows the capsid to remain inactive before the maturation step. Its function is as follows. Cysteine protease that cleaves viral polyprotein and specific host proteins. It is responsible for the autocatalytic cleavage between the P1 and P2 regions, which is the first cleavage occurring in the polyprotein. Also cleaves the host translation initiation factor EIF4G1, in order to shut down the capped cellular mRNA translation. Inhibits the host nucleus-cytoplasm protein and RNA trafficking by cleaving host members of the nuclear pores. Counteracts stress granule formation probably by antagonizing its assembly or promoting its dissassembly. In terms of biological role, plays an essential role in the virus replication cycle by acting as a viroporin. Creates a pore in the host endoplasmic reticulum and as a consequence releases Ca2+ in the cytoplasm of infected cell. In turn, high levels of cytoplasmic calcium may trigger membrane trafficking and transport of viral ER-associated proteins to viroplasms, sites of viral genome replication. Induces and associates with structural rearrangements of intracellular membranes. Displays RNA-binding, nucleotide binding and NTPase activities. May play a role in virion morphogenesis and viral RNA encapsidation by interacting with the capsid protein VP3. Functionally, localizes the viral replication complex to the surface of membranous vesicles. Together with protein 3CD binds the Cis-Active RNA Element (CRE) which is involved in RNA synthesis initiation. Acts as a cofactor to stimulate the activity of 3D polymerase, maybe through a nucleid acid chaperone activity. Its function is as follows. Localizes the viral replication complex to the surface of membranous vesicles. It inhibits host cell endoplasmic reticulum-to-Golgi apparatus transport and causes the disassembly of the Golgi complex, possibly through GBF1 interaction. This would result in depletion of MHC, trail receptors and IFN receptors at the host cell surface. Plays an essential role in viral RNA replication by recruiting ACBD3 and PI4KB at the viral replication sites, thereby allowing the formation of the rearranged membranous structures where viral replication takes place. In terms of biological role, acts as a primer for viral RNA replication and remains covalently bound to viral genomic RNA. VPg is uridylylated prior to priming replication into VPg-pUpU. The oriI viral genomic sequence may act as a template for this. The VPg-pUpU is then used as primer on the genomic RNA poly(A) by the RNA-dependent RNA polymerase to replicate the viral genome. During genome replication, the VPg-RNA linkage is removed by the host TDP2, thereby accelerating replication. During the late stage of the replication cycle, host TDP2 is excluded from sites of viral RNA synthesis and encapsidation, allowing for the generation of progeny virions. Involved in the viral replication complex and viral polypeptide maturation. It exhibits protease activity with a specificity and catalytic efficiency that is different from protease 3C. Protein 3CD lacks polymerase activity. The 3C domain in the context of protein 3CD may have an RNA binding activity. Protein 3CD binds to the 5'UTR of the viral genome. Functionally, replicates the viral genomic RNA on the surface of intracellular membranes. May form linear arrays of subunits that propagate along a strong head-to-tail interaction called interface-I. Covalently attaches UMP to a tyrosine of VPg, which is used to prime RNA synthesis. The positive stranded RNA genome is first replicated at virus induced membranous vesicles, creating a dsRNA genomic replication form. This dsRNA is then used as template to synthesize positive stranded RNA genomes. ss(+)RNA genomes are either translated, replicated or encapsidated. Its function is as follows. Major viral protease that mediates proteolytic processing of the polyprotein. Cleaves host EIF5B, contributing to host translation shutoff. Also cleaves host PABPC1, contributing to host translation shutoff. Cleaves host NLRP1, triggers host N-glycine-mediated degradation of the autoinhibitory NLRP1 N-terminal fragment. The chain is Genome polyprotein from Homo sapiens (Human).